A 238-amino-acid chain; its full sequence is MTTTTTTDDTQKLDPSASDEVIYKSWDLLIYEIWVLGIVSTWAWGCSTTEYLLPQFRANVGTNHLDVGSGTGYYLRKGGIPASTRLTLLDLERPALDLGLQRCGRSDARGLQADILQPLPVIDKFDSVSMYYLLHCIPASVEDKCAIFKHIKHNMTPDGVIHGANVLGKGVRNDGHFAAYVRRGVLKAGIFHNLDDNAYDFEHALRMNFEEVETRVVGSVFIFRASRPKLDEGDLLET.

This sequence belongs to the methyltransferase superfamily.

The protein operates within secondary metabolite biosynthesis; terpenoid biosynthesis. Functionally, N-methyltransferase; part of the gene cluster that mediates the biosynthesis of viridicatumtoxin, a tetracycline-like fungal meroterpenoid with a unique, fused spirobicyclic ring system. The first step of the pathway is the production of the malonamoyl-CoA starter unit for the polyketide synthase vrtA. The aldolase vrtJ may be involved in the synthesis of the malonamate substrate for malonamoyl-CoA synthetase vrtB. The polyketide synthase vrtA then may utilize the malonamoyl-CoA starter unit, followed by sequential condensation of eight malonyl-CoA units to form the polyketide backbone. The cyclization of the last ring could be mediated by the lactamase-like protein vrtG. The proposed post-PKS tailoring steps are a hydroxylation at C5 catalyzed the cytochrome P450 monooxygenase vrtE, a hydroxylation at C12a catalyzed by VrtH and/or VrtI, and an O-methylation by the O-methyltransferase vrtF. VrtC is then proposed to catalyze the transfer of a geranyl group synthesized by vrtD to the aromatic C ring of the tetracyclic polyketide intermediate of viridicatumtoxin to yield previridicatumtoxin. Finally, the cytochrome P450 monooxygenase vrtK catalyzes the spirocyclization of the geranyl moiety of previridicatumtoxin to afford viridicatumtoxin. This is N-methyltransferase vrtF from Penicillium aethiopicum.